We begin with the raw amino-acid sequence, 179 residues long: MARLNELYNKELVPQLMKDFNYRNIMQVPKLEKIVINMGLGEAIQNVKILDSAVSEMALIAGQKPVITKAKKSIAGFKLRQGMPIGCAVTLRREKMYEFLDRLINVSLPRVRDFKGISGKGFDGKGNYSLGVKEQLIFPEIDYDKIDKIKGLNITIVTSAKNDEEGKALLKLMGMPFRN.

It belongs to the universal ribosomal protein uL5 family. In terms of assembly, part of the 50S ribosomal subunit; part of the 5S rRNA/L5/L18/L25 subcomplex. Contacts the 5S rRNA and the P site tRNA. Forms a bridge to the 30S subunit in the 70S ribosome.

This is one of the proteins that bind and probably mediate the attachment of the 5S RNA into the large ribosomal subunit, where it forms part of the central protuberance. In the 70S ribosome it contacts protein S13 of the 30S subunit (bridge B1b), connecting the 2 subunits; this bridge is implicated in subunit movement. Contacts the P site tRNA; the 5S rRNA and some of its associated proteins might help stabilize positioning of ribosome-bound tRNAs. This Geotalea daltonii (strain DSM 22248 / JCM 15807 / FRC-32) (Geobacter daltonii) protein is Large ribosomal subunit protein uL5.